The sequence spans 370 residues: E3 ubiquitin-protein ligase E3D (370 aa).

Ala2 is modified (N-acetylalanine). The BRAT1-like motif signature appears at 129 to 159 (PLPSENWSALVGEWCCHPDPFANKPLHPREN). Position 144 (Cys144) interacts with Zn(2+). An interaction with UBE2C region spans residues 214-236 (QPSEGSFPNIPRSQFVQSVIARC). The HECT-like stretch occupies residues 332 to 368 (LPSTTCLELLLILSRNNASLPLSLRQMNSFQLWCSHC).

As to quaternary structure, interacts with UBE2C/UbcH10 (E2 ubiquitin-conjugating enzyme). In vitro, interacts with cyclin-B. Ubiquitinated by UBCH10 (E2 ubiquitin-conjugating enzyme).

It is found in the cytoplasm. The catalysed reaction is S-ubiquitinyl-[E2 ubiquitin-conjugating enzyme]-L-cysteine + [acceptor protein]-L-lysine = [E2 ubiquitin-conjugating enzyme]-L-cysteine + N(6)-ubiquitinyl-[acceptor protein]-L-lysine.. Its pathway is protein modification; protein ubiquitination. Its function is as follows. E3 ubiquitin-protein ligase which accepts ubiquitin from specific E2 ubiquitin-conjugating enzymes, and transfers it to substrates, generally promoting their degradation by the proteasome. Independently of its E3 ubiquitin-protein ligase activity, acts as an inhibitor of CPSF3 endonuclease activity by blocking CPSF3 active site. This Rattus norvegicus (Rat) protein is E3 ubiquitin-protein ligase E3D (Ube3d).